A 1873-amino-acid polypeptide reads, in one-letter code: Voltage-dependent L-type calcium channel subunit alpha-1S (1873 aa).

The disordered stretch occupies residues 1-23 (MEPSSPQDEGLRKKQPKKPLPEV). The Cytoplasmic segment spans residues 1-51 (MEPSSPQDEGLRKKQPKKPLPEVLPRPPRALFCLTLQNPLRKACISIVEWK). Residues 38–337 (NPLRKACISI…LVLGVLSGEF (300 aa)) form an I repeat. Residues 52-70 (PFETIILLTIFANCVALAV) form a helical membrane-spanning segment. The Extracellular segment spans residues 71–85 (YLPMPEDDNNSLNLG). An N-linked (GlcNAc...) asparagine glycan is attached at N79. Residues 86–106 (LEKLEYFFLTVFSIEAAMKII) form a helical membrane-spanning segment. The Cytoplasmic segment spans residues 107 to 115 (AYGFLFHQD). A helical membrane pass occupies residues 116-136 (AYLRSGWNVLDFIIVFLGVFT). The Extracellular portion of the chain corresponds to 137-160 (AILEQVNVIQSNTAPMSSKGAGLD). The chain crosses the membrane as a helical span at residues 161–179 (VKALRAFRVLRPLRLVSGV). Over 180–196 (PSLQVVLNSIFKAMLPL) the chain is Cytoplasmic. The helical transmembrane segment at 197-218 (FHIALLVLFMVIIYAIIGLELF) threads the bilayer. Topologically, residues 219-279 (KGKMHKTCYY…HGITHFDNFG (61 aa)) are extracellular. 2 disulfide bridges follow: C226–C254 and C245–C261. N257 carries an N-linked (GlcNAc...) asparagine glycan. Positions 280-301 (FSMLTVYQCITMEGWTDVLYWV) form an intramembrane region, pore-forming. The short motif at 290-293 (TMEG) is the Selectivity filter of repeat I element. E292 contacts Ca(2+). The Extracellular portion of the chain corresponds to 302–309 (NDAIGNEW). The helical transmembrane segment at 310–330 (PWIYFVTLILLGSFFILNLVL) threads the bilayer. At 331–432 (GVLSGEFTKE…WKCHDLVKSR (102 aa)) the chain is on the cytoplasmic side. Residues 357–374 (QQLEEDLRGYMSWITQGE) are binding to the beta subunit. 2 positions are modified to phosphoserine: S393 and S397. The stretch at 418–664 (NRVFRWKCHD…VFLAIAVDNL (247 aa)) is one II repeat. Residues 433-451 (VFYWLVILIVALNTLSIAS) form a helical membrane-spanning segment. Residues 452–462 (EHHNQPLWLTH) are Extracellular-facing. The chain crosses the membrane as a helical span at residues 463–483 (LQDIANRVLLSLFTIEMLLKM). Residues 484–494 (YGLGLRQYFMS) are Cytoplasmic-facing. Residues 495–514 (IFNRFDCFVVCSGILELLLV) traverse the membrane as a helical segment. The Extracellular segment spans residues 515–523 (ESGAMTPLG). Residues 524–542 (ISVLRCIRLLRLFKITKYW) form a helical membrane-spanning segment. The Cytoplasmic portion of the chain corresponds to 543 to 561 (TSLSNLVASLLNSIRSIAS). A helical transmembrane segment spans residues 562–581 (LLLLLFLFIIIFALLGMQLF). At 582 to 601 (GGRYDFEDTEVRRSNFDNFP) the chain is on the extracellular side. Positions 602–623 (QALISVFQVLTGEDWNSVMYNG) form an intramembrane region, pore-forming. The short motif at 612-615 (TGED) is the Selectivity filter of repeat II element. Residue E614 coordinates Ca(2+). Over 624–633 (IMAYGGPSYP) the chain is Extracellular. A helical transmembrane segment spans residues 634–653 (GVLVCIYFIILFVCGNYILL). The Cytoplasmic portion of the chain corresponds to 654 to 799 (NVFLAIAVDN…VLCHRIVNAT (146 aa)). Disordered regions lie at residues 673–717 (AQKA…IPTT) and 731–757 (EVKD…VSPR). S687 carries the phosphoserine; by PKA modification. Residues 690–711 (LPDKTEEEKSVMAKKLEQKPKG) are compositionally biased toward basic and acidic residues. Over residues 742 to 751 (PGDDEEDEPE) the composition is skewed to acidic residues. An interaction with STAC, STAC2 and STAC3 (via SH3 domains) region spans residues 747 to 760 (EDEPEIPVSPRPRP). The III repeat unit spans residues 786 to 1068 (NKVRVLCHRI…IFVGFVIVTF (283 aa)). A helical membrane pass occupies residues 800-818 (WFTNFILLFILLSSAALAA). Residues 819-830 (EDPIRAESVRNQ) lie on the Extracellular side of the membrane. Residues 831–850 (ILGYFDIAFTSVFTVEIVLK) traverse the membrane as a helical segment. Residues 851–866 (MTTYGAFLHKGSFCRN) are Cytoplasmic-facing. Residues 867–885 (YFNILDLLVVAVSLISMGL) traverse the membrane as a helical segment. Residues 886–892 (ESSTISV) are Extracellular-facing. A helical transmembrane segment spans residues 893–911 (VKILRVLRVLRPLRAINRA). Residues 912-930 (KGLKHVVQCVFVAIRTIGN) are Cytoplasmic-facing. The helical transmembrane segment at 931–950 (IVLVTTLLQFMFACIGVQLF) threads the bilayer. Residues 951 to 1000 (KGKFFSCNDLSKMTEEECRGYYYVYKDGDPTQMELRPRQWIHNDFHFDNV) lie on the Extracellular side of the membrane. Cysteines 957 and 968 form a disulfide. The segment at 988–1077 (RQWIHNDFHF…FQEQGETEYK (90 aa)) is dihydropyridine binding. The pore-forming intramembrane region spans 1001-1021 (LSAMMSLFTVSTFEGWPQLLY). Positions 1012–1015 (TFEG) match the Selectivity filter of repeat III motif. E1014 serves as a coordination point for Ca(2+). The Extracellular segment spans residues 1022–1038 (RAIDSNEEDMGPVYNNR). Residues 1039–1060 (VEMAIFFIIYIILIAFFMMNIF) traverse the membrane as a helical segment. Residues 1061–1118 (VGFVIVTFQEQGETEYKNCELDKNQRQCVQYALKARPLRCYIPKNPYQYQVWYVVTSS) are Cytoplasmic-facing. Residues 1105–1384 (NPYQYQVWYV…LFVAVIMDNF (280 aa)) form an IV repeat. Residues 1119-1140 (YFEYLMFALIMLNTICLGMQHY) form a helical membrane-spanning segment. At 1141 to 1148 (HQSEEMNH) the chain is on the extracellular side. A helical transmembrane segment spans residues 1149-1170 (ISDILNVAFTIIFTLEMILKLL). Topologically, residues 1171-1180 (AFKARGYFGD) are cytoplasmic. Residues 1181 to 1200 (PWNVFDFLIVIGSIIDVILS) form a helical membrane-spanning segment. The Extracellular portion of the chain corresponds to 1201–1231 (EIDTFLASSGGLYCLGGGCGNVDPDESARIS). A helical membrane pass occupies residues 1232–1250 (SAFFRLFRVMRLIKLLSRA). Over 1251-1268 (EGVRTLLWTFIKSFQALP) the chain is Cytoplasmic. A helical transmembrane segment spans residues 1269–1289 (YVALLIVMLFFIYAVIGMQMF). The Extracellular portion of the chain corresponds to 1290-1311 (GKIALVDGTQINRNNNFQTFPQ). Positions 1312–1330 (AVLLLFRCATGEAWQEILL) form an intramembrane region, pore-forming. Positions 1321-1324 (TGEA) match the Selectivity filter of repeat IV motif. The Extracellular segment spans residues 1331 to 1356 (ACSYGKLCDPESDYAPGEEYTCGTNF). The tract at residues 1337–1403 (LCDPESDYAP…LGPHHLDEFK (67 aa)) is dihydropyridine binding. The cysteines at positions 1338 and 1352 are disulfide-linked. Residues 1349-1391 (EYTCGTNFAYYYFISFYMLCAFLIINLFVAVIMDNFDYLTRDW) are phenylalkylamine binding. The chain crosses the membrane as a helical span at residues 1357 to 1381 (AYYYFISFYMLCAFLIINLFVAVIM). At 1382-1873 (DNFDYLTRDW…SQETLIPPRP (492 aa)) the chain is on the cytoplasmic side. Positions 1522–1542 (KFYATFLIQEHFRKFMKRQEE) are interaction with calmodulin. At S1575 the chain carries Phosphoserine; by PKA and CAMK2. Position 1579 is a phosphothreonine; by CK2 (T1579). At S1617 the chain carries Phosphoserine; by PKA. Disordered regions lie at residues 1689–1782 (EFPG…RPAP) and 1841–1873 (GMAS…PPRP). Residues 1847 to 1858 (GSLSRRSSLGSL) are compositionally biased toward low complexity.

It belongs to the calcium channel alpha-1 subunit (TC 1.A.1.11) family. CACNA1S subfamily. In terms of assembly, component of a calcium channel complex consisting of a pore-forming alpha subunit (CACNA1S) and the ancillary subunits CACNB1 or CACNB2, CACNG1 and CACNA2D1. The channel complex contains alpha, beta, gamma and delta subunits in a 1:1:1:1 ratio, i.e. it contains either CACNB1 or CACNB2. CACNA1S channel activity is modulated by the auxiliary subunits (CACNB1 or CACNB2, CACNG1 and CACNA2D1). Interacts with DYSF and JSRP1. Interacts with RYR1. Interacts with STAC, STAC2 and STAC3 (via their SH3 domains). Interaction with STAC3 promotes expression at the cell membrane. Interaction with STAC2 promotes expression at the cell membrane, but with much lower efficiency than STAC3. Interaction with STAC1 leads to very low levels expression at the cell membrane, much less than the levels observed upon interaction with STAC3 and STAC2. Interacts with CALM. The alpha-1S subunit is found in two isoforms in the skeletal muscle: a minor form of 212 kDa containing the complete amino acid sequence, and a major form of 190 kDa derived from the full-length form by post-translational proteolysis close to Phe-1690. In terms of processing, phosphorylated. Phosphorylation by PKA activates the calcium channel. Both the minor and major forms are phosphorylated in vitro by PKA. Phosphorylation at Ser-1575 is involved in beta-adrenergic-mediated regulation of the channel. In terms of tissue distribution, detected in skeletal muscle T-tubules (at protein level).

Its subcellular location is the cell membrane. It is found in the sarcolemma. The protein localises to the T-tubule. It carries out the reaction Ca(2+)(in) = Ca(2+)(out). Its activity is regulated as follows. Channel activity is blocked by dihydropyridines (DHP), phenylalkylamines, and by benzothiazepines. Pore-forming, alpha-1S subunit of the voltage-gated calcium channel that gives rise to L-type calcium currents in skeletal muscle. Calcium channels containing the alpha-1S subunit play an important role in excitation-contraction coupling in skeletal muscle via their interaction with RYR1, which triggers Ca(2+) release from the sarcplasmic reticulum and ultimately results in muscle contraction. Long-lasting (L-type) calcium channels belong to the 'high-voltage activated' (HVA) group. This chain is Voltage-dependent L-type calcium channel subunit alpha-1S (CACNA1S), found in Oryctolagus cuniculus (Rabbit).